The sequence spans 252 residues: Triosephosphate isomerase (252 aa).

Position 10-12 (10-12) interacts with substrate; it reads NWK. The active-site Electrophile is His96. The Proton acceptor role is filled by Glu168. Substrate-binding positions include Gly174, Ser214, and 235–236; that span reads GG.

The protein belongs to the triosephosphate isomerase family. As to quaternary structure, homodimer.

The protein resides in the cytoplasm. The catalysed reaction is D-glyceraldehyde 3-phosphate = dihydroxyacetone phosphate. Its pathway is carbohydrate biosynthesis; gluconeogenesis. It functions in the pathway carbohydrate degradation; glycolysis; D-glyceraldehyde 3-phosphate from glycerone phosphate: step 1/1. Involved in the gluconeogenesis. Catalyzes stereospecifically the conversion of dihydroxyacetone phosphate (DHAP) to D-glyceraldehyde-3-phosphate (G3P). The chain is Triosephosphate isomerase from Streptococcus pyogenes serotype M18 (strain MGAS8232).